The chain runs to 529 residues: Peptide chain release factor 3 (529 aa).

The 270-residue stretch at 11–280 (NSRRTFAIIS…AFINWAPEPK (270 aa)) folds into the tr-type G domain. Residues 20–27 (SHPDAGKT), 88–92 (DTPGH), and 142–145 (NKMD) contribute to the GTP site.

It belongs to the TRAFAC class translation factor GTPase superfamily. Classic translation factor GTPase family. PrfC subfamily.

The protein localises to the cytoplasm. Increases the formation of ribosomal termination complexes and stimulates activities of RF-1 and RF-2. It binds guanine nucleotides and has strong preference for UGA stop codons. It may interact directly with the ribosome. The stimulation of RF-1 and RF-2 is significantly reduced by GTP and GDP, but not by GMP. This Acinetobacter baylyi (strain ATCC 33305 / BD413 / ADP1) protein is Peptide chain release factor 3.